A 392-amino-acid chain; its full sequence is Alanine--glyoxylate aminotransferase (392 aa).

N6-(pyridoxal phosphate)lysine is present on K209. Position 225 is an N6-acetyllysine; alternate (K225). K225 carries the N6-succinyllysine; alternate modification. Residues K234 and K312 each carry the N6-acetyllysine modification. R360 is a substrate binding site. The Microbody targeting signal signature appears at 390 to 392; sequence SQL.

The protein belongs to the class-V pyridoxal-phosphate-dependent aminotransferase family. Homodimer. Requires pyridoxal 5'-phosphate as cofactor.

It localises to the peroxisome. It carries out the reaction L-serine + pyruvate = 3-hydroxypyruvate + L-alanine. The catalysed reaction is glyoxylate + L-alanine = glycine + pyruvate. In terms of biological role, peroxisomal aminotransferase that catalyzes the transamination of glyoxylate to glycine and contributes to the glyoxylate detoxification. Also catalyzes the transamination between L-serine and pyruvate and contributes to gluconeogenesis from the L-serine metabolism. In Oryctolagus cuniculus (Rabbit), this protein is Alanine--glyoxylate aminotransferase.